Reading from the N-terminus, the 372-residue chain is MAKKRVVIGMSGGVDSSVSAWLLKEQGYEVIGLFMKNWEDDDDSEYCSTRQDWIDAASVADVVGVDIEAVNFASEYKDRVFAEFLREYQAGRTPNPDVLCNAEIKFKAFLDHAMLLGADMIATGHYARVREVTSGPDAGRVELLKAVDASKDQSYFLHRLNQAQLAKTLFPLGEIRKTEVRKIAEQLKLPNATKKDSTGICFIGERPFREFLNRYLSYQPGPMKTPEGVIVGEHVGLSFYTLGQRKGIGLGGMKSHKNTDGNSEPWYVARKDVATNTLYIVQGHDHPWLLSSELSAGQMSWVAGSPPSEELVSAKTRYRQADVACSQRSDADGFSLAFAAPQWAVTPGQSAVLYQGDVCLGGGIINTSAVPA.

Residues 9–16 (GMSGGVDS) and Met35 each bind ATP. An interaction with target base in tRNA region spans residues 95 to 97 (NPD). The Nucleophile role is filled by Cys100. Cys100 and Cys201 are oxidised to a cystine. Gly124 is a binding site for ATP. The interval 151-153 (KDQ) is interaction with tRNA. Cys201 functions as the Cysteine persulfide intermediate in the catalytic mechanism. The interval 317-318 (RY) is interaction with tRNA.

It belongs to the MnmA/TRMU family.

It is found in the cytoplasm. It catalyses the reaction S-sulfanyl-L-cysteinyl-[protein] + uridine(34) in tRNA + AH2 + ATP = 2-thiouridine(34) in tRNA + L-cysteinyl-[protein] + A + AMP + diphosphate + H(+). In terms of biological role, catalyzes the 2-thiolation of uridine at the wobble position (U34) of tRNA, leading to the formation of s(2)U34. The polypeptide is tRNA-specific 2-thiouridylase MnmA (Janthinobacterium sp. (strain Marseille) (Minibacterium massiliensis)).